Consider the following 277-residue polypeptide: Ribosomal RNA small subunit methyltransferase I (277 aa).

The protein belongs to the methyltransferase superfamily. RsmI family.

The protein localises to the cytoplasm. It catalyses the reaction cytidine(1402) in 16S rRNA + S-adenosyl-L-methionine = 2'-O-methylcytidine(1402) in 16S rRNA + S-adenosyl-L-homocysteine + H(+). In terms of biological role, catalyzes the 2'-O-methylation of the ribose of cytidine 1402 (C1402) in 16S rRNA. The polypeptide is Ribosomal RNA small subunit methyltransferase I (Mycoplasma genitalium (strain ATCC 33530 / DSM 19775 / NCTC 10195 / G37) (Mycoplasmoides genitalium)).